The primary structure comprises 235 residues: MSLDPRGALVLFSGGQDSTACLAWALEHHAHVETIGFDYGQRHVVELECRVQVREAIARSFPLWAGRLANDHVLDLGLLGQISDTALTSARAIEMQANGLPSTFVPGRNLLFLGFAATVAYRRNLSVLVGGMCETDYSGYPDCRDNTLKALQVALSLGMATPMTIETPLMWLDKARTWALTDRLGGRALNELILEHTHSCYLGDRSVRHAWGYGCNACPACELRRKGYEAWCAGA.

12-22 (FSGGQDSTACL) contributes to the ATP binding site. Positions 200, 215, 218, and 221 each coordinate Zn(2+).

This sequence belongs to the QueC family. Zn(2+) is required as a cofactor.

The enzyme catalyses 7-carboxy-7-deazaguanine + NH4(+) + ATP = 7-cyano-7-deazaguanine + ADP + phosphate + H2O + H(+). The protein operates within purine metabolism; 7-cyano-7-deazaguanine biosynthesis. In terms of biological role, catalyzes the ATP-dependent conversion of 7-carboxy-7-deazaguanine (CDG) to 7-cyano-7-deazaguanine (preQ(0)). This Methylibium petroleiphilum (strain ATCC BAA-1232 / LMG 22953 / PM1) protein is 7-cyano-7-deazaguanine synthase.